The sequence spans 157 residues: MPRPCSVLSLDVGRKRIGLAGCDPLGITVTPIKALHRGRFDDDLPVLQQLCQDRRVQGLVVGLPLDAAGQPTAQADHCLRYGRRLAQALQLPLAWVNEHSSTWAAGERHGLKGDRSGRLDSAAAALLLDQWLREGPDLKPVQGLLGGAGAELVDGGS.

This sequence belongs to the YqgF nuclease family.

Its subcellular location is the cytoplasm. In terms of biological role, could be a nuclease involved in processing of the 5'-end of pre-16S rRNA. The polypeptide is Putative pre-16S rRNA nuclease (Parasynechococcus marenigrum (strain WH8102)).